Consider the following 922-residue polypeptide: Chaperone protein ClpC, chloroplastic (922 aa).

The N-terminal 72 residues, 1 to 72 (MARVLAQSLS…RPGLDFHSKV (72 aa)), are a transit peptide targeting the chloroplast. The Clp R domain occupies 92–234 (FERFTEKAIK…RTQVIRMVGE (143 aa)). Repeat regions lie at residues 95-160 (FTEK…IGRG) and 170-234 (FTPR…MVGE). The tract at residues 255 to 502 (LEEYGTNLTK…RVRLQHAQLP (248 aa)) is i. 300-307 (GEPGVGKT) is a binding site for ATP. Residues 509–544 (DKEVRKIVKEKEEYVRNQDFEKAGELRDKEMDLKAQ) enclose the UVR domain. Positions 569–760 (VTEVDIQHIV…LLIMTSNVGS (192 aa)) are II. ATP is bound at residue 643 to 650 (GPTGVGKS).

It belongs to the ClpA/ClpB family. ClpC subfamily.

The protein resides in the plastid. Its subcellular location is the chloroplast. In terms of biological role, molecular chaperone that may interact with a ClpP-like protease involved in degradation of denatured proteins in the chloroplast. The chain is Chaperone protein ClpC, chloroplastic from Pisum sativum (Garden pea).